The following is a 221-amino-acid chain: 2-phospho-L-lactate guanylyltransferase (221 aa).

The protein belongs to the CofC family. As to quaternary structure, homodimer.

It catalyses the reaction (2S)-2-phospholactate + GTP + H(+) = (2S)-lactyl-2-diphospho-5'-guanosine + diphosphate. It participates in cofactor biosynthesis; coenzyme F420 biosynthesis. Guanylyltransferase that catalyzes the activation of (2S)-2-phospholactate (2-PL) as (2S)-lactyl-2-diphospho-5'-guanosine, via the condensation of 2-PL with GTP. It is involved in the biosynthesis of coenzyme F420, a hydride carrier cofactor. The protein is 2-phospho-L-lactate guanylyltransferase of Methanothrix thermoacetophila (strain DSM 6194 / JCM 14653 / NBRC 101360 / PT) (Methanosaeta thermophila).